The chain runs to 129 residues: Small ribosomal subunit protein uS11 (129 aa).

This sequence belongs to the universal ribosomal protein uS11 family. As to quaternary structure, part of the 30S ribosomal subunit. Interacts with proteins S7 and S18. Binds to IF-3.

Functionally, located on the platform of the 30S subunit, it bridges several disparate RNA helices of the 16S rRNA. Forms part of the Shine-Dalgarno cleft in the 70S ribosome. This Yersinia enterocolitica serotype O:8 / biotype 1B (strain NCTC 13174 / 8081) protein is Small ribosomal subunit protein uS11.